The chain runs to 619 residues: Kininogen-2 (619 aa).

A signal peptide spans 1–18; sequence MKLITILFLCSRLLPSLT. Gln-19 carries the pyrrolidone carboxylic acid modification. In terms of domain architecture, Cystatin kininogen-type 1 spans 27–131; sequence CNDQDVFKAV…IQTCLITPAE (105 aa). 9 disulfides stabilise this stretch: Cys-27-Cys-589, Cys-82-Cys-93, Cys-106-Cys-125, Cys-141-Cys-144, Cys-205-Cys-217, Cys-228-Cys-247, Cys-261-Cys-264, Cys-325-Cys-337, and Cys-348-Cys-367. An N-linked (GlcNAc...) asparagine glycan is attached at Asn-87. An O-linked (GalNAc...) threonine; partial glycan is attached at Thr-136. Residues 150-253 enclose the Cystatin kininogen-type 2 domain; the sequence is TKSPDLEPVL…SQKCDLYPGE (104 aa). N-linked (GlcNAc...) asparagine glycosylation is found at Asn-168 and Asn-169. Asn-197 carries an N-linked (GlcNAc...) asparagine; partial glycan. Asn-204 carries an N-linked (GlcNAc...) asparagine glycan. Residues 270 to 373 form the Cystatin kininogen-type 3 domain; sequence VDSPDLEEAL…TVNCQPLGQT (104 aa). Residue Asn-280 is glycosylated (N-linked (GlcNAc...) asparagine). Pro-380 carries the 4-hydroxyproline modification. The interval 394 to 495 is disordered; it reads EGSTTVSLPH…GKNNGKHYDW (102 aa). Ser-396 carries an O-linked (GalNAc...) serine glycan. O-linked (GalNAc...) threonine glycans are attached at residues Thr-397 and Thr-398. O-linked (GalNAc...) serine glycans are attached at residues Ser-400 and Ser-404. Positions 442-490 are enriched in basic residues; the sequence is GHKHKHDQGHGHHRSHGLGHGHQKQHGLGHGHKHGHGHGKHKNKGKNNG. O-linked (GalNAc...) serine glycosylation is present at Ser-510. O-linked (GalNAc...) threonine glycosylation is found at Thr-518, Thr-522, Thr-534, Thr-546, Thr-551, and Thr-568.

In terms of processing, bradykinin is released from kininogen by plasma kallikrein. Plasma.

The protein resides in the secreted. The protein localises to the extracellular space. (1) Kininogens are inhibitors of thiol proteases; (2) HMW-kininogen plays an important role in blood coagulation by helping to position optimally prekallikrein and factor XI next to factor XII; (3) HMW-kininogen inhibits the thrombin- and plasmin-induced aggregation of thrombocytes; (4) the active peptide bradykinin that is released from HMW-kininogen shows a variety of physiological effects: (4A) influence in smooth muscle contraction, (4B) induction of hypotension, (4C) natriuresis and diuresis, (4D) decrease in blood glucose level, (4E) it is a mediator of inflammation and causes (4E1) increase in vascular permeability, (4E2) stimulation of nociceptors (4E3) release of other mediators of inflammation (e.g. prostaglandins), (4F) it has a cardioprotective effect (directly via bradykinin action, indirectly via endothelium-derived relaxing factor action); (5) LMW-kininogen inhibits the aggregation of thrombocytes; (6) LMW-kininogen is in contrast to HMW-kininogen not involved in blood clotting. This chain is Kininogen-2 (KNG2), found in Bos taurus (Bovine).